The sequence spans 355 residues: Chromatin modification-related protein EAF3 (355 aa).

In terms of domain architecture, Tudor-knot spans 3–77 (EVGGKCLAYH…WDEWVSVDRI (75 aa)). A disordered region spans residues 98–150 (ASLAQQQKTKNGGSAKRGGGGAHSESNHGGRRSGSGDRRDSNAEERGIVPSEG). Over residues 131-144 (GSGDRRDSNAEERG) the composition is skewed to basic and acidic residues. The MRG domain maps to 163–353 (SRNKLRIHIP…TSSQYEGVAL (191 aa)).

The protein belongs to the MRG family. In terms of assembly, component of the NuA4 histone acetyltransferase complex.

Its subcellular location is the nucleus. Involved in deacetylation of histones, chromatin assembly and chromosome segregation. May act as a transcriptional oscillator, directing histone deacetylases to specific chromosomal domains. Component of the NuA4 histone acetyltransferase complex which is involved in transcriptional activation of selected genes principally by acetylation of nucleosomal histone H4 and H2A. The NuA4 complex is also involved in DNA repair. In Candida glabrata (strain ATCC 2001 / BCRC 20586 / JCM 3761 / NBRC 0622 / NRRL Y-65 / CBS 138) (Yeast), this protein is Chromatin modification-related protein EAF3 (EAF3).